We begin with the raw amino-acid sequence, 618 residues long: Proline--tRNA ligase (618 aa).

It belongs to the class-II aminoacyl-tRNA synthetase family. ProS type 1 subfamily. In terms of assembly, homodimer.

It localises to the cytoplasm. The catalysed reaction is tRNA(Pro) + L-proline + ATP = L-prolyl-tRNA(Pro) + AMP + diphosphate. Functionally, catalyzes the attachment of proline to tRNA(Pro) in a two-step reaction: proline is first activated by ATP to form Pro-AMP and then transferred to the acceptor end of tRNA(Pro). As ProRS can inadvertently accommodate and process non-cognate amino acids such as alanine and cysteine, to avoid such errors it has two additional distinct editing activities against alanine. One activity is designated as 'pretransfer' editing and involves the tRNA(Pro)-independent hydrolysis of activated Ala-AMP. The other activity is designated 'posttransfer' editing and involves deacylation of mischarged Ala-tRNA(Pro). The misacylated Cys-tRNA(Pro) is not edited by ProRS. The polypeptide is Proline--tRNA ligase (Streptococcus pyogenes serotype M18 (strain MGAS8232)).